The primary structure comprises 310 residues: Protein A56 (310 aa).

Positions 1-16 (MKQLSIVILLLSIVYT) are cleaved as a signal peptide. The Virion surface portion of the chain corresponds to 17-275 (TKPHPTQISK…TKYTTSDFIE (259 aa)). The region spanning 19 to 121 (PHPTQISKKL…TNDTDKIDYE (103 aa)) is the Ig-like V-type domain. A disulfide bond links Cys-36 and Cys-105. N-linked (GlcNAc...) asparagine; by host glycosylation is found at Asn-39, Asn-113, and Asn-133. Residues 153-195 (HTEEQHDSDTTICTSESTTQISETSESTTSSQISETSESTSYG) form a disordered region. The span at 162–193 (TTICTSESTTQISETSESTTSSQISETSESTS) shows a compositional bias: low complexity. Residue Asn-203 is glycosylated (N-linked (GlcNAc...) asparagine; by host). Residues 276-300 (IFGIVSLILLLAVAIFCIIYYFCSG) form a helical membrane-spanning segment. The Intravirion portion of the chain corresponds to 301 to 310 (RSRKQETNIL).

In terms of assembly, heterodimerizes with K2. The heterodimer A56/K2 interacts with components of the entry fusion complex A16 and G9. Interacts with K2 protein. Heterodimer with C3/VPC protein; disulfide-linked. In terms of processing, glycosylated; contains phosphate and sulfate-substituted glycans. O-glycosylation is required for hemagglutination and hemadsorption activities of infected cell membranes.

The protein localises to the virion membrane. The protein resides in the host membrane. Its function is as follows. Prevents cell to cell fusion by interacting with and directing the viral K2 protein on the host plasma membrane. The A56-K2 complex associates with components of the entry fusion complex (EFC) presumably to avoid superinfection and syncytium formation. Via its interaction with C3/VCP protein, protects the infected cell and probably also the extracellular enveloped virus from complement attack. The polypeptide is Protein A56 (HA) (Raccoon poxvirus (RCN)).